Reading from the N-terminus, the 213-residue chain is 3-isopropylmalate dehydratase small subunit (213 aa).

Belongs to the LeuD family. LeuD type 1 subfamily. As to quaternary structure, heterodimer of LeuC and LeuD.

It carries out the reaction (2R,3S)-3-isopropylmalate = (2S)-2-isopropylmalate. It participates in amino-acid biosynthesis; L-leucine biosynthesis; L-leucine from 3-methyl-2-oxobutanoate: step 2/4. Its function is as follows. Catalyzes the isomerization between 2-isopropylmalate and 3-isopropylmalate, via the formation of 2-isopropylmaleate. The sequence is that of 3-isopropylmalate dehydratase small subunit from Neisseria meningitidis serogroup C / serotype 2a (strain ATCC 700532 / DSM 15464 / FAM18).